Consider the following 729-residue polypeptide: Phosphoribosylformylglycinamidine synthase subunit PurL (729 aa).

The active site involves His-54. Positions 57 and 96 each coordinate ATP. Glu-98 contacts Mg(2+). Residues 99-102 (SHNH) and Arg-121 contribute to the substrate site. The active-site Proton acceptor is the His-100. Asp-122 is a binding site for Mg(2+). Gln-245 lines the substrate pocket. Asp-273 is a binding site for Mg(2+). 317–319 (ETQ) contacts substrate. Positions 495 and 532 each coordinate ATP. Mg(2+) is bound at residue Asn-533. Position 535 (Ser-535) interacts with substrate.

Belongs to the FGAMS family. In terms of assembly, monomer. Part of the FGAM synthase complex composed of 1 PurL, 1 PurQ and 2 PurS subunits.

It is found in the cytoplasm. It catalyses the reaction N(2)-formyl-N(1)-(5-phospho-beta-D-ribosyl)glycinamide + L-glutamine + ATP + H2O = 2-formamido-N(1)-(5-O-phospho-beta-D-ribosyl)acetamidine + L-glutamate + ADP + phosphate + H(+). The protein operates within purine metabolism; IMP biosynthesis via de novo pathway; 5-amino-1-(5-phospho-D-ribosyl)imidazole from N(2)-formyl-N(1)-(5-phospho-D-ribosyl)glycinamide: step 1/2. Functionally, part of the phosphoribosylformylglycinamidine synthase complex involved in the purines biosynthetic pathway. Catalyzes the ATP-dependent conversion of formylglycinamide ribonucleotide (FGAR) and glutamine to yield formylglycinamidine ribonucleotide (FGAM) and glutamate. The FGAM synthase complex is composed of three subunits. PurQ produces an ammonia molecule by converting glutamine to glutamate. PurL transfers the ammonia molecule to FGAR to form FGAM in an ATP-dependent manner. PurS interacts with PurQ and PurL and is thought to assist in the transfer of the ammonia molecule from PurQ to PurL. The sequence is that of Phosphoribosylformylglycinamidine synthase subunit PurL from Staphylococcus aureus (strain USA300).